Here is a 320-residue protein sequence, read N- to C-terminus: Homoserine kinase (320 aa).

100-110 (PLSSGMGSSAA) is an ATP binding site.

It belongs to the GHMP kinase family. Homoserine kinase subfamily.

It localises to the cytoplasm. It catalyses the reaction L-homoserine + ATP = O-phospho-L-homoserine + ADP + H(+). It functions in the pathway amino-acid biosynthesis; L-threonine biosynthesis; L-threonine from L-aspartate: step 4/5. Functionally, catalyzes the ATP-dependent phosphorylation of L-homoserine to L-homoserine phosphate. This is Homoserine kinase from Chlorobium phaeobacteroides (strain BS1).